A 264-amino-acid chain; its full sequence is MAATGEALTPQGYIQHHLTNLSVGEGFWTWHIDSLFFSVGLGVLFLWLFRSVGKKATTGVPGKLQCFVEMIVEFVDSSVKETFHGRNPVIAPLALTIFVWVFMMNFMDMVPVDWIPELAMAAGIPYMKVVPTTDLNITFSMAIGVFLLIIYYSIKVKGISGFVKELTLQPFNHKAMIPVNLLLETVTLIAKPISLALRLFGNLYAGELIFILIALMYGANWALSTLGVTLQLGWLIFHILVITLQAFIFMMLTIVYLSMAHEDH.

The next 6 membrane-spanning stretches (helical) occupy residues 29–49 (TWHIDSLFFSVGLGVLFLWLF), 89–109 (VIAPLALTIFVWVFMMNFMDM), 134–154 (DLNITFSMAIGVFLLIIYYSI), 177–197 (IPVNLLLETVTLIAKPISLAL), 208–228 (LIFILIALMYGANWALSTLGV), and 235–255 (LIFHILVITLQAFIFMMLTIV).

This sequence belongs to the ATPase A chain family. As to quaternary structure, F-type ATPases have 2 components, CF(1) - the catalytic core - and CF(0) - the membrane proton channel. CF(1) has five subunits: alpha(3), beta(3), gamma(1), delta(1), epsilon(1). CF(0) has three main subunits: a(1), b(2) and c(9-12). The alpha and beta chains form an alternating ring which encloses part of the gamma chain. CF(1) is attached to CF(0) by a central stalk formed by the gamma and epsilon chains, while a peripheral stalk is formed by the delta and b chains.

It is found in the cell inner membrane. In terms of biological role, key component of the proton channel; it plays a direct role in the translocation of protons across the membrane. The chain is ATP synthase subunit a from Shewanella woodyi (strain ATCC 51908 / MS32).